The following is a 354-amino-acid chain: Arginase-2, mitochondrial (354 aa).

The N-terminal 22 residues, 1 to 22, are a transit peptide targeting the mitochondrion; the sequence is MSLRGSLSRLLQTRVHSILKKS. 4 residues coordinate Mn(2+): His120, Asp143, His145, and Asp147. Substrate contacts are provided by residues 145–149, 156–158, and Asp202; these read HADIN and SGN. Residues Asp251 and Asp253 each coordinate Mn(2+). Substrate contacts are provided by Thr265 and Glu296. Residues 334–354 are disordered; the sequence is YDQLPTPSSPDESENQARVRI.

It belongs to the arginase family. In terms of assembly, homotrimer. Mn(2+) is required as a cofactor. Expressed most strongly in kidney and prostate, much less strongly in the brain, skeletal muscle, placenta, lung, mammary gland, macrophage, uterus, testis and gut, but apparently not in the liver, heart and pancreas. Expressed in activated T cells.

Its subcellular location is the mitochondrion. It carries out the reaction L-arginine + H2O = urea + L-ornithine. The protein operates within nitrogen metabolism; urea cycle; L-ornithine and urea from L-arginine: step 1/1. May play a role in the regulation of extra-urea cycle arginine metabolism and also in down-regulation of nitric oxide synthesis. Extrahepatic arginase functions to regulate L-arginine bioavailability to nitric oxid synthase (NOS). Arginine metabolism is a critical regulator of innate and adaptive immune responses. Seems to be involved in negative regulation of the survival capacity of activated CD4(+) and CD8(+) T cells. May suppress inflammation-related signaling in asthmatic airway epithelium. May contribute to the immune evasion of H.pylori by restricting M1 macrophage activation and polyamine metabolism. In fetal dendritic cells may play a role in promoting immune suppression and T cell TNF-alpha production during gestation. Regulates RPS6KB1 signaling, which promotes endothelial cell senescence and inflammation and implicates NOS3/eNOS dysfunction. Can inhibit endothelial autophagy independently of its enzymatic activity implicating mTORC2 signaling. Involved in vascular smooth muscle cell senescence and apoptosis independently of its enzymatic activity. Since NOS is found in the penile corpus cavernosum smooth muscle, the clitoral corpus cavernosum and the vagina, arginase-2 plays a role in both male and female sexual arousal. This is Arginase-2, mitochondrial (ARG2) from Homo sapiens (Human).